The primary structure comprises 130 residues: DNA-directed RNA polymerase subunit omega (130 aa).

Disordered stretches follow at residues 79-98 (EPES…VDAD) and 108-130 (TEEE…EEDE).

It belongs to the RNA polymerase subunit omega family. The RNAP catalytic core consists of 2 alpha, 1 beta, 1 beta' and 1 omega subunit. When a sigma factor is associated with the core the holoenzyme is formed, which can initiate transcription.

It catalyses the reaction RNA(n) + a ribonucleoside 5'-triphosphate = RNA(n+1) + diphosphate. In terms of biological role, promotes RNA polymerase assembly. Latches the N- and C-terminal regions of the beta' subunit thereby facilitating its interaction with the beta and alpha subunits. The chain is DNA-directed RNA polymerase subunit omega from Nitrobacter winogradskyi (strain ATCC 25391 / DSM 10237 / CIP 104748 / NCIMB 11846 / Nb-255).